Consider the following 984-residue polypeptide: Ephrin type-A receptor 3 (984 aa).

Positions 1 to 20 (MDCHLSILILFGCCVLSCSR) are cleaved as a signal peptide. Over 21–541 (ELSPQPSNEV…SFSISGENSH (521 aa)) the chain is Extracellular. Positions 29 to 207 (EVNLLDSKTI…YFKKCPFTVK (179 aa)) constitute an Eph LBD domain. 5 N-linked (GlcNAc...) asparagine glycosylation sites follow: Asn232, Asn337, Asn391, Asn404, and Asn493. Fibronectin type-III domains are found at residues 325-435 (PPSA…TNQA) and 436-532 (APSP…SPDS). Residues 542–565 (VVMIAISAAVAIIVLTVVTYVLVG) form a helical membrane-spanning segment. At 566 to 984 (RFCGYHKSKH…TQSKNGPVPV (419 aa)) the chain is on the cytoplasmic side. 2 positions are modified to phosphotyrosine; by autocatalysis: Tyr597 and Tyr603. The region spanning 622 to 883 (IAIDKVVGAG…QIVSILDKLI (262 aa)) is the Protein kinase domain. Residues 629–634 (GAGEFG), Lys654, and 701–707 (EYMENGS) contribute to the ATP site. The residue at position 702 (Tyr702) is a Phosphotyrosine; by autocatalysis. Catalysis depends on Asp747, which acts as the Proton acceptor. Residue 751–752 (RN) coordinates ATP. Position 780 is a phosphotyrosine; by autocatalysis (Tyr780). In terms of domain architecture, SAM spans 912 to 976 (ATFHTTGDWL…ISSIKALETQ (65 aa)). Residue Tyr938 is modified to Phosphotyrosine. The short motif at 982–984 (VPV) is the PDZ-binding element.

It belongs to the protein kinase superfamily. Tyr protein kinase family. Ephrin receptor subfamily. In terms of assembly, heterotetramer upon binding of the ligand. The heterotetramer is composed of an ephrin dimer and a receptor dimer. Oligomerization is probably required to induce biological responses. Forms a ternary EFNA5-EPHA3-ADAM10 complex mediating EFNA5 extracellular domain shedding by ADAM10 which regulates the EFNA5-EPHA3 complex internalization and function. Interacts (phosphorylated) with PTPN1; dephosphorylates EPHA3 and may regulate its trafficking and function. Interacts (phosphorylated) with CRK; mediates EFNA5-EPHA3 signaling through RHOA GTPase activation. Interacts with NCK1 (via SH2 domain); mediates EFNA5-EPHA3 signaling. Post-translationally, autophosphorylates upon activation by EFNA5. Phosphorylation on Tyr-603 mediates interaction with NCK1. Dephosphorylated by PTPN1. As to expression, most abundant in the heart, brain and lung.

It localises to the cell membrane. It carries out the reaction L-tyrosyl-[protein] + ATP = O-phospho-L-tyrosyl-[protein] + ADP + H(+). Functionally, receptor tyrosine kinase which binds promiscuously membrane-bound ephrin family ligands residing on adjacent cells, leading to contact-dependent bidirectional signaling into neighboring cells. The signaling pathway downstream of the receptor is referred to as forward signaling while the signaling pathway downstream of the ephrin ligand is referred to as reverse signaling. Highly promiscuous for ephrin-A ligands it binds preferentially EFNA5. Upon activation by EFNA5 regulates cell-cell adhesion, cytoskeletal organization and cell migration. Plays a role in cardiac cells migration and differentiation and regulates the formation of the atrioventricular canal and septum during development probably through activation by EFNA1. Involved in the retinotectal mapping of neurons. May also control the segregation but not the guidance of motor and sensory axons during neuromuscular circuit development. In Rattus norvegicus (Rat), this protein is Ephrin type-A receptor 3 (Epha3).